Consider the following 71-residue polypeptide: Beta-defensin 10 (71 aa).

An N-terminal signal peptide occupies residues Met-1–Gly-23. 3 disulfides stabilise this stretch: Cys-37/Cys-66, Cys-44/Cys-59, and Cys-49/Cys-67.

Belongs to the beta-defensin family.

Its subcellular location is the secreted. Its function is as follows. Has antibacterial activity. The protein is Beta-defensin 10 (Defb10) of Rattus norvegicus (Rat).